A 70-amino-acid chain; its full sequence is DNA gyrase inhibitor YacG (70 aa).

Positions 7, 10, 26, and 30 each coordinate Zn(2+).

The protein belongs to the DNA gyrase inhibitor YacG family. As to quaternary structure, interacts with GyrB. It depends on Zn(2+) as a cofactor.

Its function is as follows. Inhibits all the catalytic activities of DNA gyrase by preventing its interaction with DNA. Acts by binding directly to the C-terminal domain of GyrB, which probably disrupts DNA binding by the gyrase. This chain is DNA gyrase inhibitor YacG, found in Shewanella sediminis (strain HAW-EB3).